Here is a 120-residue protein sequence, read N- to C-terminus: Phosphoribosyl-AMP cyclohydrolase (120 aa).

Residue Asp75 participates in Mg(2+) binding. Position 76 (Cys76) interacts with Zn(2+). 2 residues coordinate Mg(2+): Asp77 and Asp79. The Zn(2+) site is built by Cys92 and Cys99.

The protein belongs to the PRA-CH family. Homodimer. The cofactor is Mg(2+). Zn(2+) serves as cofactor.

Its subcellular location is the cytoplasm. It carries out the reaction 1-(5-phospho-beta-D-ribosyl)-5'-AMP + H2O = 1-(5-phospho-beta-D-ribosyl)-5-[(5-phospho-beta-D-ribosylamino)methylideneamino]imidazole-4-carboxamide. It participates in amino-acid biosynthesis; L-histidine biosynthesis; L-histidine from 5-phospho-alpha-D-ribose 1-diphosphate: step 3/9. Its function is as follows. Catalyzes the hydrolysis of the adenine ring of phosphoribosyl-AMP. The polypeptide is Phosphoribosyl-AMP cyclohydrolase (Methanosarcina acetivorans (strain ATCC 35395 / DSM 2834 / JCM 12185 / C2A)).